We begin with the raw amino-acid sequence, 274 residues long: 2-dehydro-3-deoxyphosphooctonate aldolase (274 aa).

This sequence belongs to the KdsA family.

The protein resides in the cytoplasm. The enzyme catalyses D-arabinose 5-phosphate + phosphoenolpyruvate + H2O = 3-deoxy-alpha-D-manno-2-octulosonate-8-phosphate + phosphate. It participates in carbohydrate biosynthesis; 3-deoxy-D-manno-octulosonate biosynthesis; 3-deoxy-D-manno-octulosonate from D-ribulose 5-phosphate: step 2/3. Its pathway is bacterial outer membrane biogenesis; lipopolysaccharide biosynthesis. This is 2-dehydro-3-deoxyphosphooctonate aldolase from Legionella pneumophila (strain Lens).